Here is a 601-residue protein sequence, read N- to C-terminus: MAEPSGAETRPPIRVTVKTPKDKEEIVICDRASVKEFKEEISRRFKAQQDQLVLIFAGKILKDGDTLNQHGIKDGLTVHLVIKTPQKAQDPAAATASSPSTPDPASAPSTTPASPATPAQPSTSGSASSDAGSGSRRSSGGGPSPGAGEGSPSATASILSGFGGILGLGSLGLGSANFMELQQQMQRQLMSNPEMLSQIMENPLVQDMMSNPDLMRHMIMANPQMQQLMERNPEISHMLNNPELMRQTMELARNPAMMQEMMRNQDRALSNLESIPGGYNALRRMYTDIQEPMFSAAREQFGNNPFSSLAGNSDSSSSQPLRTENREPLPNPWSPSPPTSQAPGSGGEGTGGSGTSQVHPTVSNPFGINAASLGSGMFNSPEMQALLQQISENPQLMQNVISAPYMRSMMQTLAQNPDFAAQMMVNVPLFAGNPQLQEQLRLQLPVFLQQMQNPESLSILTNPRAMQALLQIQQGLQTLQTEAPGLVPSLGSFGISRTPAPSAGSNAGSTPEAPTSSPATPATSSPTGASSAQQQLMQQMIQLLAGSGNSQVQTPEVRFQQQLEQLNSMGFINREANLQALIATGGDINAAIERLLGSQLS.

The 75-residue stretch at 13–87 (IRVTVKTPKD…VHLVIKTPQK (75 aa)) folds into the Ubiquitin-like domain. Glycyl lysine isopeptide (Lys-Gly) (interchain with G-Cter in SUMO2) cross-links involve residues Lys-23 and Lys-62. Residues 87–155 (KAQDPAAATA…GAGEGSPSAT (69 aa)) form a disordered region. Over residues 88-138 (AQDPAAATASSPSTPDPASAPSTTPASPATPAQPSTSGSASSDAGSGSRRS) the composition is skewed to low complexity. Phosphoserine is present on residues Ser-98 and Ser-144. A compositionally biased stretch (gly residues) spans 139–149 (SGGGPSPGAGE). STI1 domains are found at residues 192–229 (NPEMLSQIMENPLVQDMMSNPDLMRHMIMANPQMQQLM) and 230–261 (ERNPEISHMLNNPELMRQTMELARNPAMMQEM). Phosphothreonine is present on Thr-287. The segment at 301–366 (FGNNPFSSLA…QVHPTVSNPF (66 aa)) is disordered. Residues 307–318 (SSLAGNSDSSSS) are compositionally biased toward low complexity. A Phosphoserine; by ATM modification is found at Ser-318. Positions 329–340 (LPNPWSPSPPTS) are enriched in pro residues. The segment covering 344-354 (GSGGEGTGGSG) has biased composition (gly residues). The span at 357-366 (QVHPTVSNPF) shows a compositional bias: polar residues. STI1 domains lie at 393–440 (NPQL…QEQL) and 444–476 (LPVFLQQMQNPESLSILTNPRAMQALLQIQQGL). Positions 490 to 533 (LGSFGISRTPAPSAGSNAGSTPEAPTSSPATPATSSPTGASSAQ) are disordered. The segment covering 507 to 533 (AGSTPEAPTSSPATPATSSPTGASSAQ) has biased composition (low complexity). Positions 553-598 (QTPEVRFQQQLEQLNSMGFINREANLQALIATGGDINAAIERLLGS) constitute a UBA domain.

In terms of assembly, homooligomer. Binds signal sequences of proteins that are targeted to the endoplasmic reticulum. Interacts (via UBA domain) with GJA1 (not ubiquitinated) and with ubiquitin; both compete for the same binding site. Interacts (via UBA domain) with ubiquitin and with polyubiquitin chains. Interacts (via ubiquitin-like domain) with PSMD2 and PSMD4, regulatory subunits of the 26S proteasome. Interacts with ATXN1/SCA1; interaction with ATXN1 inhibits polyubiquitination of UBQLN4 and interferes with PSMD4 binding. Interacts with HERPUD1. Interacts (via ubiquitin-like domain) with UBQLN1 (via UBA domain). Interacts with UBQLN2. Interacts (via STI1 1 and 2 domains) with MAP1LC3A/B/C. Interacts with BAG6. Interacts with MRE11 (when ubiquitinated); interaction with ubiquitinated MRE11 leads to MRE11 removal from chromatin. Interacts with DESI1/POST; leading to nuclear export. Interacts with BCL2A1 and BCL2L10. As to quaternary structure, (Microbial infection) Interacts with Mumps virus protein SH. Post-translationally, phosphorylated by ATM at Ser-318 in response to DNA damage, leading to localization in the nucleus and recruitment to sites of DNA damage. Ubiquitinated; this does not lead to proteasomal degradation. May undergo both 'Lys-48'- and 'Lys-63'-linked polyubiquitination. In terms of tissue distribution, highly expressed in pancreas, kidney, skeletal muscle, heart and throughout the brain, and at lower levels in placenta, lung and liver.

Its subcellular location is the nucleus. The protein resides in the cytoplasm. It localises to the chromosome. The protein localises to the endoplasmic reticulum. It is found in the perinuclear region. Its subcellular location is the cytoplasmic vesicle. The protein resides in the autophagosome. Functionally, regulator of protein degradation that mediates the proteasomal targeting of misfolded, mislocalized or accumulated proteins. Acts by binding polyubiquitin chains of target proteins via its UBA domain and by interacting with subunits of the proteasome via its ubiquitin-like domain. Key regulator of DNA repair that represses homologous recombination repair: in response to DNA damage, recruited to sites of DNA damage following phosphorylation by ATM and acts by binding and removing ubiquitinated MRE11 from damaged chromatin, leading to MRE11 degradation by the proteasome. MRE11 degradation prevents homologous recombination repair, redirecting double-strand break repair toward non-homologous end joining (NHEJ). Specifically recognizes and binds mislocalized transmembrane-containing proteins and targets them to proteasomal degradation. Collaborates with DESI1/POST in the export of ubiquitinated proteins from the nucleus to the cytoplasm. Also plays a role in the regulation of the proteasomal degradation of non-ubiquitinated GJA1. Acts as an adapter protein that recruits UBQLN1 to the autophagy machinery. Mediates the association of UBQLN1 with autophagosomes and the autophagy-related protein LC3 (MAP1LC3A/B/C) and may assist in the maturation of autophagosomes to autolysosomes by mediating autophagosome-lysosome fusion. The sequence is that of Ubiquilin-4 from Homo sapiens (Human).